The chain runs to 208 residues: 2,3-bisphosphoglycerate-dependent phosphoglycerate mutase (208 aa).

Substrate-binding positions include 9–16 (RHGQSEWN), 22–23 (TG), R61, 88–91 (ERDY), K99, 115–116 (RR), and 159–160 (GN). The Tele-phosphohistidine intermediate role is filled by H10. The active-site Proton donor/acceptor is the E88.

The protein belongs to the phosphoglycerate mutase family. BPG-dependent PGAM subfamily. Homodimer.

It catalyses the reaction (2R)-2-phosphoglycerate = (2R)-3-phosphoglycerate. It functions in the pathway carbohydrate degradation; glycolysis; pyruvate from D-glyceraldehyde 3-phosphate: step 3/5. Functionally, catalyzes the interconversion of 2-phosphoglycerate and 3-phosphoglycerate. The protein is 2,3-bisphosphoglycerate-dependent phosphoglycerate mutase of Methylobacterium sp. (strain 4-46).